The following is a 144-amino-acid chain: uncharacterized protein (144 aa).

The first 23 residues, methionine 1–tyrosine 23, serve as a signal peptide directing secretion.

This is an uncharacterized protein from Archaeoglobus fulgidus (strain ATCC 49558 / DSM 4304 / JCM 9628 / NBRC 100126 / VC-16).